The primary structure comprises 932 residues: MRVKETLNLGKTKFKMRGNLPVKEVERQNVWAENKVYEQRQKLNEGKPSFILHDGPPYANGDIHMGHALNKITKDFIVRYKSMNGFRAPYVPGWDTHGLPIEQKLKQAGYDRKKMTDNEFRELCRKYALEQVDRQRDEFKRLGVAGEWDNPYLTLKPEFEAAQVRVFGAFAKRHLIYRGQKPVFWSWSSESALAEAEVEYHDVTSPSAFYGEHVIDGKGVLDDDTYMVVWTTTPWTIPASEGITIDASFDYVVVQPAGENRKFVLAAELLDENAERFGWEDVQVLKTVKGAELENILCEHPFDNSRHLVTMLGDFVTLDSGTGLVHTAPGYGEDDYRIGKQYDLPIFAPVDDKGFLTAEAGDDFAGVFYDDANKIALDKLKAAGLLLKYMPYEHSYPFDWRTKKPIIFRATPQWFASVGDMRDEILKSMDDVEFFPEWGKKRLYNMIRDRGDWVISRQRVWGVPLPIFYAEDGTAIMDEVTINHVADLFGKYGSNVWFERDAKDLLPDGYTNEHSPNGTFTKETDIMDVWFDSGSSHQGVLAERSYLDYPADLYLEGSDQYRGWFNSSLITSVAVSGHAPYKQVLSQGFTLDNQGRKMSKSLGNTIAPADVIKQMGAEIVRMWVASVDTSSDVRVSMESFKQVADSYKKFRNTVRFMLGNTADFDPKANRVAYEDLASVDQYMETRLNEFVAETKDHYDHYDFLDIYKKLINFLTVDLSNFYLDIAKDIMYIDAEDSHSRRSMQTVFYDVLVALTKLFTPMLPHTTEEIWPFLKEPEEFAQLAEMPAVQNYANSDELMAQWTRFMDLRSNVLKALEEARDAKLIGKSLEAHLDLYVDDDTQAFLDHLNTNVRQMLMVSALDLHALSDAPEDAETFGDTLAIKVGHADGDVCDRCRMVKTDVGSDEAYPMLCARCAAIVRENYPESVTTGLEA.

A 'HIGH' region motif is present at residues 57–67 (PYANGDIHMGH). Glu-556 lines the L-isoleucyl-5'-AMP pocket. The 'KMSKS' region motif lies at 597-601 (KMSKS). Position 600 (Lys-600) interacts with ATP. Zn(2+)-binding residues include Cys-891, Cys-894, Cys-911, and Cys-914.

It belongs to the class-I aminoacyl-tRNA synthetase family. IleS type 1 subfamily. As to quaternary structure, monomer. It depends on Zn(2+) as a cofactor.

The protein resides in the cytoplasm. The enzyme catalyses tRNA(Ile) + L-isoleucine + ATP = L-isoleucyl-tRNA(Ile) + AMP + diphosphate. Its function is as follows. Catalyzes the attachment of isoleucine to tRNA(Ile). As IleRS can inadvertently accommodate and process structurally similar amino acids such as valine, to avoid such errors it has two additional distinct tRNA(Ile)-dependent editing activities. One activity is designated as 'pretransfer' editing and involves the hydrolysis of activated Val-AMP. The other activity is designated 'posttransfer' editing and involves deacylation of mischarged Val-tRNA(Ile). The chain is Isoleucine--tRNA ligase from Lactiplantibacillus plantarum (strain ATCC BAA-793 / NCIMB 8826 / WCFS1) (Lactobacillus plantarum).